The following is a 93-amino-acid chain: Red pigment-concentrating hormone (93 aa).

The N-terminal stretch at 1–21 is a signal peptide; that stretch reads MVRAVVATLLVVLVVASCVSA. Gln-22 carries the post-translational modification Pyrrolidone carboxylic acid. Trp-29 carries the tryptophan amide modification. Positions 33–93 are excised as a propeptide; it reads AAAGGEGTGM…VQCQDEEYLG (61 aa). The segment at 34–56 is disordered; that stretch reads AAGGEGTGMHPPAGAVVPPPSSL.

The protein belongs to the AKH/HRTH/RPCH family. As to expression, strongly expressed in the eyestalk and weakly in brain. Not expressed in other tissues tested.

It localises to the secreted. This hormone adapts the animal to light backgrounds by stimulating concentration of the pigment of its red body-chromatophores. This is Red pigment-concentrating hormone from Penaeus monodon (Giant tiger prawn).